The primary structure comprises 80 residues: Lantibiotic Flvalpha.b (80 aa).

A propeptide spans 1-38 (MNKNPIYRSEEEAKNIACGNVAAELDENSQALDAINGA) (cleaved by FlvT). 2,3-didehydrobutyrine; by FlvM1 occurs at positions 43 and 47. Positions 52–55 (TVGC) form a cross-link, beta-methyllanthionine (Thr-Cys); by FlvM1. Residues 58 to 68 (SYGLGNGGYCC) constitute a cross-link (lanthionine (Ser-Cys); by FlvM1). Cross-links (beta-methyllanthionine (Thr-Cys); by FlvM1) lie at residues 69–74 (TYTVEC) and 71–78 (TVECSKTC).

The lanthionine formed by Ser-58 and Cys-68 forms a putative lipid II binding motif. Post-translationally, maturation of FlvA1 peptides involves the enzymatic conversion of Thr, and Ser into dehydrated AA and the formation of thioether bonds with cysteines. Modifications are processed by the flavecin synthetase FlvM1. This is followed by membrane translocation and cleavage of the modified precursor. In terms of processing, contains DL-lanthionine and DL-beta-methyllanthionine, when coepressed in E.coli with the flavecin synthetase FlvM1.

It is found in the secreted. Functionally, lanthionine-containing peptide antibiotic (lantibiotic) only active on Gram-positive bacteria in synergy with Flvbeta peptides, which are encoded by the same operon than Flvalpha.a. Shows antibacterial activity in synergy with Flvbeta.b, Flvbeta.c, Flvbeta.e and Flvbeta.g. Does not show antibacterial activity when tested with Flvbeta.a, Flvbeta.d, Flvbeta.f and Flvbeta.h. The bactericidal activity of lantibiotics is based on depolarization of energized bacterial cytoplasmic membranes, initiated by the formation of aqueous transmembrane pores. This is Lantibiotic Flvalpha.b from Ruminococcus flavefaciens.